Here is a 102-residue protein sequence, read N- to C-terminus: Small ribosomal subunit protein uS10 (102 aa).

It belongs to the universal ribosomal protein uS10 family. Part of the 30S ribosomal subunit.

Its function is as follows. Involved in the binding of tRNA to the ribosomes. This chain is Small ribosomal subunit protein uS10, found in Pelagibacter ubique (strain HTCC1062).